The primary structure comprises 439 residues: Fibulin-7 (439 aa).

An N-terminal signal peptide occupies residues 1–24; the sequence is MVPSSPRALFLLLLILACPEPRAS. The stretch at 28–53 forms a coiled coil; sequence LSKQQLLSAIRQLQQLLKGQETRFAE. In terms of domain architecture, Sushi spans 79 to 136; that stretch reads VSCPALNTPADGRKFGSKYLVDHEVHFTCNPGFRLVGPSSVVCLPNGTWTGEQPHCRG. Cystine bridges form between C81-C121, C107-C134, C140-C151, C145-C160, C162-C171, C228-C244, C240-C253, C255-C268, C274-C287, C281-C296, and C301-C318. Residue N124 is glycosylated (N-linked (GlcNAc...) asparagine). Residues 136–172 enclose the EGF-like 1; calcium-binding domain; that stretch reads GISECSSQPCQNGGTCVEGVNQYRCICPPGRTGNRCQ. One can recognise an EGF-like 2; calcium-binding domain in the interval 224 to 269; sequence DVNECELYGQEGRPRLCMHACVNTPGSYRCTCPGGYRTLADGKSCE. Residues 270–319 form the EGF-like 3; calcium-binding domain; the sequence is DVDECVGLQPVCPQGTTCINTGGSFQCVSPECPEGSGNVSYVKTSPFQCE. N307 is a glycosylation site (N-linked (GlcNAc...) asparagine).

It belongs to the fibulin family. As to quaternary structure, interacts with heparin, FBLN1, FN1 and DSPP. Preferentially binds dental mesenchyme cells and odontoblasts but not dental epithelial cells or nondental cells. Binding requires a heparan sulfate-containing receptor on the cell surface as well as an integrin. N-glycosylated.

The protein localises to the secreted. The protein resides in the extracellular space. It is found in the extracellular matrix. In terms of biological role, an adhesion molecule that interacts with extracellular matrix molecules in developing teeth and may play important roles in differentiation and maintenance of odontoblasts as well as in dentin formation. In Homo sapiens (Human), this protein is Fibulin-7 (FBLN7).